We begin with the raw amino-acid sequence, 72 residues long: Large ribosomal subunit protein bL31 (72 aa).

It belongs to the bacterial ribosomal protein bL31 family. Type A subfamily. Part of the 50S ribosomal subunit.

In terms of biological role, binds the 23S rRNA. This is Large ribosomal subunit protein bL31 from Deinococcus deserti (strain DSM 17065 / CIP 109153 / LMG 22923 / VCD115).